The primary structure comprises 86 residues: Progonadoliberin IIA (86 aa).

The N-terminal stretch at 1–24 (MVHICRLFVVMGMLLCLSAQFASS) is a signal peptide. Gln25 is subject to Pyrrolidone carboxylic acid. A Glycine amide modification is found at Gly34.

Belongs to the GnRH family. As to expression, olfactory bulbs, hypothalamus and telencephalon, midbrain and posterior brain areas.

It localises to the secreted. Stimulates the secretion of gonadotropins. The polypeptide is Progonadoliberin IIA (gnrh2a) (Carassius auratus (Goldfish)).